A 198-amino-acid polypeptide reads, in one-letter code: UPF0314 protein Atu8092 (198 aa).

The next 3 helical transmembrane spans lie at 14–34 (LRWF…LYAM), 64–84 (WYTP…WLLF), and 150–170 (VPVW…GWLI).

It belongs to the UPF0314 family.

The protein localises to the cell membrane. This chain is UPF0314 protein Atu8092, found in Agrobacterium fabrum (strain C58 / ATCC 33970) (Agrobacterium tumefaciens (strain C58)).